Consider the following 370-residue polypeptide: Prolactin-releasing peptide receptor (370 aa).

Topologically, residues 1–62 (MASLPTQGPA…LQLVHQLKGL (62 aa)) are extracellular. N-linked (GlcNAc...) asparagine glycans are attached at residues N27 and N36. A helical transmembrane segment spans residues 63 to 83 (IVLLYSIVVVVGLVGNCLLVL). Topologically, residues 84-101 (VIARVRRLHNVTNFLIGN) are cytoplasmic. The helical transmembrane segment at 102–122 (LALSDVLMCTACVPLTLAYAF) threads the bilayer. At 123-126 (EPRG) the chain is on the extracellular side. A helical membrane pass occupies residues 127-147 (WVFGGGLCHLVFFLQPVTVYV). A disulfide bridge connects residues C134 and C211. The Cytoplasmic portion of the chain corresponds to 148–175 (SVFTLTTIAVDRYVVLVHPLRRRISLRF). Residues 176–196 (SAYAVLAIWALSAVLALPAAL) form a helical membrane-spanning segment. Residues 197–225 (HTYHVELKPHRVRLCEEFWGSQERQRQLY) are Extracellular-facing. Residues 226 to 246 (AWGLLLVTYLLPLLVILLSYV) traverse the membrane as a helical segment. Residues 247-276 (RVSVNLRNRVVPGCVTQSQADWDRARRRRT) lie on the Cytoplasmic side of the membrane. Residues 277-297 (FCLLVVVVVVFAVCWLPLHVF) traverse the membrane as a helical segment. Over 298–317 (NLLRDLDPHAIDPYAFGLVQ) the chain is Extracellular. The helical transmembrane segment at 318-338 (LLCHWLAMSSACYNPFIYAWL) threads the bilayer. At 339–369 (HDSFREELRKLLLAWPRKIAPHGQSMTVSVV) the chain is on the cytoplasmic side. The interval 365–370 (TVSVVI) is required for interaction with GRIP1, GRIP2 and PICK1.

It belongs to the G-protein coupled receptor 1 family. As to quaternary structure, interacts through its C-terminal region with the PDZ domain-containing proteins GRIP1, GRIP2 and PICK1. Interacts with PDZ domains 4 and 5 of GRIP1 and with the PDZ domain of PICK1.

Its subcellular location is the cell membrane. Receptor for prolactin-releasing peptide (PrRP). Implicated in lactation, regulation of food intake and pain-signal processing. This chain is Prolactin-releasing peptide receptor (PRLHR), found in Bos taurus (Bovine).